Reading from the N-terminus, the 874-residue chain is Coatomer subunit gamma-1 (874 aa).

The span at 1 to 11 (MLKKFDKKDEE) shows a compositional bias: basic and acidic residues. Positions 1-21 (MLKKFDKKDEESGGGSNPFQH) are disordered. 4 HEAT repeats span residues 64-101 (TEATEAFFAMTKLFQSNDPTLRRMCYLTIKEMSCIAED), 283-320 (KELAPAVSVLQLFCSSPKAALRYAAVRTLNKVAMKHPS), 322-355 (VTACNLDLENLVTDANRSIATLAITTLLKTGSEG), and 356-392 (SIDRLMKQISSFMSEISDEFKVVVVQAISALCQKYPR). Phosphothreonine is present on T594. Positions 609–874 (RQEIFQEQLA…PVDIVLASVG (266 aa)) are interaction with ZNF289/ARFGAP2.

Belongs to the COPG family. As to quaternary structure, oligomeric complex that consists of at least the alpha, beta, beta', gamma, delta, epsilon and zeta subunits. Interacts with ZNF289/ARFGAP2 through its C-terminal appendage domain. Interacts with EGFR upon EGF treatment; interaction is essential for regulation of EGF-dependent nuclear transport of EGFR by retrograde trafficking from the Golgi to the ER. The coatomer interacts with KDEL receptors; the interaction is important for retrograde trafficking of KDEL-bearing proteins from the Golgi to the endoplasmic reticulum. Interacts with COPB1. Interacts with TMED10 (via C-terminus). Interacts with TMED2, TMED3, TMED7 and TMED9.

The protein localises to the cytoplasm. Its subcellular location is the cytosol. It is found in the golgi apparatus membrane. The protein resides in the cytoplasmic vesicle. It localises to the COPI-coated vesicle membrane. The coatomer is a cytosolic protein complex that binds to dilysine motifs and reversibly associates with Golgi non-clathrin-coated vesicles, which further mediate biosynthetic protein transport from the ER, via the Golgi up to the trans Golgi network. Coatomer complex is required for budding from Golgi membranes, and is essential for the retrograde Golgi-to-ER transport of dilysine-tagged proteins. In mammals, the coatomer can only be recruited by membranes associated to ADP-ribosylation factors (ARFs), which are small GTP-binding proteins; the complex also influences the Golgi structural integrity, as well as the processing, activity, and endocytic recycling of LDL receptors. Required for limiting lipid storage in lipid droplets. Involved in lipid homeostasis by regulating the presence of perilipin family members PLIN2 and PLIN3 at the lipid droplet surface and promoting the association of adipocyte triglyceride lipase (PNPLA2) with the lipid droplet surface to mediate lipolysis. The polypeptide is Coatomer subunit gamma-1 (COPG1) (Bos taurus (Bovine)).